Here is a 717-residue protein sequence, read N- to C-terminus: UvrABC system protein C (717 aa).

The region spanning Asp16–Val95 is the GIY-YIG domain. A UVR domain is found at Gly208–Ala243. The disordered stretch occupies residues Glu467–Arg548. The segment covering Glu477 to Pro522 has biased composition (low complexity).

The protein belongs to the UvrC family. Interacts with UvrB in an incision complex.

It is found in the cytoplasm. Its function is as follows. The UvrABC repair system catalyzes the recognition and processing of DNA lesions. UvrC both incises the 5' and 3' sides of the lesion. The N-terminal half is responsible for the 3' incision and the C-terminal half is responsible for the 5' incision. In Streptomyces griseus subsp. griseus (strain JCM 4626 / CBS 651.72 / NBRC 13350 / KCC S-0626 / ISP 5235), this protein is UvrABC system protein C.